Consider the following 282-residue polypeptide: Formamidopyrimidine-DNA glycosylase (282 aa).

Proline 2 functions as the Schiff-base intermediate with DNA in the catalytic mechanism. Residue glutamate 3 is the Proton donor of the active site. Lysine 61 (proton donor; for beta-elimination activity) is an active-site residue. DNA contacts are provided by histidine 93, arginine 112, and lysine 158. The FPG-type zinc finger occupies 244–278 (DAYGREGEGCRRCGAVMHREKFMNRSSFYCPRCQP). Catalysis depends on arginine 268, which acts as the Proton donor; for delta-elimination activity.

The protein belongs to the FPG family. In terms of assembly, monomer. Requires Zn(2+) as cofactor.

It carries out the reaction Hydrolysis of DNA containing ring-opened 7-methylguanine residues, releasing 2,6-diamino-4-hydroxy-5-(N-methyl)formamidopyrimidine.. The catalysed reaction is 2'-deoxyribonucleotide-(2'-deoxyribose 5'-phosphate)-2'-deoxyribonucleotide-DNA = a 3'-end 2'-deoxyribonucleotide-(2,3-dehydro-2,3-deoxyribose 5'-phosphate)-DNA + a 5'-end 5'-phospho-2'-deoxyribonucleoside-DNA + H(+). Its function is as follows. Involved in base excision repair of DNA damaged by oxidation or by mutagenic agents. Acts as a DNA glycosylase that recognizes and removes damaged bases. Has a preference for oxidized purines, such as 7,8-dihydro-8-oxoguanine (8-oxoG). Has AP (apurinic/apyrimidinic) lyase activity and introduces nicks in the DNA strand. Cleaves the DNA backbone by beta-delta elimination to generate a single-strand break at the site of the removed base with both 3'- and 5'-phosphates. This chain is Formamidopyrimidine-DNA glycosylase, found in Mycobacterium leprae (strain Br4923).